The sequence spans 411 residues: Serine hydroxymethyltransferase (411 aa).

Residues Leu119 and 123-125 (GHL) each bind (6S)-5,6,7,8-tetrahydrofolate. Lys228 is modified (N6-(pyridoxal phosphate)lysine). 351–353 (SPF) serves as a coordination point for (6S)-5,6,7,8-tetrahydrofolate.

Belongs to the SHMT family. In terms of assembly, homodimer. Pyridoxal 5'-phosphate serves as cofactor.

Its subcellular location is the cytoplasm. The enzyme catalyses (6R)-5,10-methylene-5,6,7,8-tetrahydrofolate + glycine + H2O = (6S)-5,6,7,8-tetrahydrofolate + L-serine. The protein operates within one-carbon metabolism; tetrahydrofolate interconversion. It functions in the pathway amino-acid biosynthesis; glycine biosynthesis; glycine from L-serine: step 1/1. Its function is as follows. Catalyzes the reversible interconversion of serine and glycine with tetrahydrofolate (THF) serving as the one-carbon carrier. This reaction serves as the major source of one-carbon groups required for the biosynthesis of purines, thymidylate, methionine, and other important biomolecules. Also exhibits THF-independent aldolase activity toward beta-hydroxyamino acids, producing glycine and aldehydes, via a retro-aldol mechanism. This chain is Serine hydroxymethyltransferase, found in Clostridium novyi (strain NT).